The chain runs to 2563 residues: MYNHQGKNNKMSDIAIVGYSFKLPQGVEDDDAFWDVLENRRNLMTDWPESRVKTDSFANNKHQKWNGKGGHFINDDVAAFDAPFFSLTAKEASAMDPMQRWTLEATYHAFENAGLPVDSLKGSRTAVFSASMLEDYSRMTAVDPDNLERTAVTGSTVSCIIPNRVSWYFDLRGPSIHVNTACSSSLSAVDMACKALNSGDALCAVVTGTNLLLDPSIFQVLANQGFLSPDGVCYSFDERANGYARGEGVIAVVLKPVQAAIENGDMIRAVIRSIGSNQDGHTPILTQPSSQSQEELIRHVYKQAGLSMSDTRYVEAHGTGTPVGDPIEVKAIGRCFQEHRSHSEPLYVGSVKANIGHLEGASALASLVKCICNMTRRSTQGGPKLTLTVILEKGVILPNALLQKMNPAMNADTYSIEVPIQNVQWPVQGLRRVSLNSFGFGGSNSHIVLDDALHYLQDRSLSGIHNTSLIPKPITNGSGVTNGHGAAHTNGANVTKGVANGHSDVELRKLLVWTAADEKAAKRTMEAYDNFHKEKMLGDPKKLDALASTLGSRRSNMLWRASAVVDGSKRQTLSPSKPIRSSEDLGLAFAFTGQGAQYINMGSGLEHYAVYQETLEKISEIYSSFGCSWNLFGNCGENINMPQYSQPLATAVQIALVDLLANFGITPKVVIGHSSGEIAAAYASGGLSLVSACRVSYFRGLLAGKLRKTNASSPGAMLSINLAPHDVLGYLEKTGVLTVSVACINSPLNITLSGPEEAIDKIKSQADQDGIFAQKLKTGVAYHSQSMKVIAGEYLAALEGLTKRKDGTSIPMVSSVTGKSISPETLSTGQYWVDNMLSPVRFAKVVQVIANNNSARKLGLGNITDLIEIGPHPALRRPVKDTLSEMSSASKGVRYSYVLHRSHPAIQTILELAGQLFCEGYPVSILAANQQRTKAKFLVDCPKYPFDRSQRYWAESRLSRDFRLREAVKGELLGVRVSDWNPLEPRWRNFWSIDSSAWTGDHKISDTVLFPASGMLLMAIEAAQEMVPSDRAVFGYNIEKAEFMNPIIVPETWEDRLETQVHLRVVEKQLAAKFDVSIFTYSHNEWVECFTANISVEFQDNDSNGERRVSHEHIQRQHQDVAHTCTLPIDPRVFYRDAAAVGLQYGDWFQLMRNIKWDGKTSAMARVDLSQARFNIRSLVHPAVLDQAFQVLRASSGQQPAANVPVRLKNAWFSSKPWKTPAVLWMSEATPTLHGYGEQGKVTALGEDGEILCCIESVVTSAVSGGITHKEKKLVYSVEWKPQFSMLGSDQLTRLFAANAVPKDDSAVLENHSRLCHTLELVAARVLKNVDKSKVPADLQRHVGWMEHHVSKLPAEHQAEATKISDEELESRLAEVDSVLPAWKLYTTCARKLPDILFGELDPLQVVFESDQADIFYSDLFRNLCADGQLNYLLDLASHENPALRVLEVGAGTGGMTGHVISALQERERRTGGLAFSEYTYTDISPAFFETASKRWPDLKSQGRITFKTLDLDRSIDVQGVDPGSYDLVIAASVLHATPYLEATIRNVRKALKPGGRLILLEVINPDDIATNFMAGLVPGWWVAREEWRPHSAAIPEHLWDKCLKDNGFSGNDLVIRDYQDDQCHIMSVIITTASEPQHKVEEKASRGRLVMLISEDASMKERELADQVRARIDPNLERRATVVTFSLAPVQRELAKLTTDDAVICFVEAGDKPLLSTLSEGQFSCLQFLISKVSNLLWVTSASISDSMCPDNSVAQGFFRSIRAEQPDTHIVTLAIDGEMAQTSQAGFISEVYKTAFETETPSKEVEYVVQDGVITTGRAVRDISTDTALRSLVSKQLQQKSWGEGPALKLGISQPGSLDSLQFVEDQSHAEELGPSDVEIEAMAWGLTSRDLNIALGHPDKRTEEFGSDCVGVVTRIGESCSTTIRIGDRVAIVSAGCMRKYARANEACVFKIPDSLGFENAASLIIPGLSACHSILNVARVQENDNVLIHSAASLLGQIAVRFAQTMSAPVFATVSTAAEKQLLIHILSLNAEHIFDSNSPSLTQDVMRVTEEEGVDVLLDCSRDTLHTPLSCVTDGGCIVSLGGRNSSVASTMAAEIMSRSLTFSSIDIMRLKPKAFSQLAQTTMQLLAEDKIQPPQLLPAFKISDIRNGFKKLQEDTSERVIVIAEQGDTVPQFVQDRRPWTFDGNSTYLVAGGSGGLGRAIIRWMADSGAKHLIIPSRSGAISEAASQLVAELTSHGVNIVAPKCDVSVREDVAVMLEECSHTMPPIKGCINAAMVLQDAIFQSNMTFQQWDLTIRSKVDTSKNLHELLPKDLDFSILLSSLAGVVGQMASANYAGGCAYQDALAKHRRMHGQSALSLDIGWMSNIGIIAEKEAYQRQRQTSNDMQPINDKELLALLTLCCDPNNQLKLPPLSEGQVLFGLRTPADILEEGQQPPALLERPLLSAFSFLAGSNSTPDQAVDHAENARDVFQKSSDARERQQVVIRAIAAKLARAMSISPDDVEPSKPLSSYGVDSLMAVELRNWINKEFSSTVAVFDIIGSVSIAGVAEVVEARSSI.

One can recognise a Ketosynthase family 3 (KS3) domain in the interval 11–451 (MSDIAIVGYS…GSNSHIVLDD (441 aa)). Catalysis depends on for beta-ketoacyl synthase activity residues Cys-182, His-317, and His-357. A Malonyl-CoA:ACP transacylase (MAT) domain is found at 589-890 (FAFTGQGAQY…DTLSEMSSAS (302 aa)). The segment at 970–1101 (GELLGVRVSD…ANISVEFQDN (132 aa)) is N-terminal hotdog fold. Residues 970–1269 (GELLGVRVSD…TSAVSGGITH (300 aa)) enclose the PKS/mFAS DH domain. His-1002 acts as the Proton acceptor; for dehydratase activity in catalysis. Residues 1126-1269 (TLPIDPRVFY…TSAVSGGITH (144 aa)) form a C-terminal hotdog fold region. Asp-1186 serves as the catalytic Proton donor; for dehydratase activity. Residues 1296-1618 (FAANAVPKDD…FSGNDLVIRD (323 aa)) form a methyltransferase (CMet) domain region. Residues 1858–2168 (GSLDSLQFVE…QEDTSERVIV (311 aa)) enclose the Enoyl reductase (ER) domain. The Ketoreductase (KR) domain occupies 2192-2370 (STYLVAGGSG…ALSLDIGWMS (179 aa)). The Carrier domain maps to 2480-2561 (SDARERQQVV…GVAEVVEARS (82 aa)). Ser-2521 is modified (O-(pantetheine 4'-phosphoryl)serine).

Pantetheine 4'-phosphate serves as cofactor.

It participates in secondary metabolite biosynthesis. Its function is as follows. Highly reducing polyketide synthase; part of the gene cluster that mediates the biosynthesis of the tetraketides fugralins such as linear fugralin A and cyclic fugralin B, volatile compounds that play a role in the asexual reproductive cycle but are not involved in pathogenicity. One of the key features of fugralins is the presence of a double methyl group, which is only rarely encountered in fungal secondary metabolites. As the fugralins cluster does not contain an independent methyltransferase, the PKS FGR1 is probably responsible for adding two methyl groups to the same carbon atom. Fugralin B is similar to fugralin A except for a cyclization between the carboxylic acid C-8 and the alcohol on C-4 resulting in a six membered lactone ring, probably catalyzed by the cyclase FGR4. The exact role of the individual cluster genes remains unknown and further work is needed to unravel the biosynthetic pathway. This is Highly reducing polyketide synthase 2 from Gibberella zeae (strain ATCC MYA-4620 / CBS 123657 / FGSC 9075 / NRRL 31084 / PH-1) (Wheat head blight fungus).